The primary structure comprises 508 residues: N-acetyl-D-hexosamine oxidase (508 aa).

The FAD-binding PCMH-type domain maps to T26–E203. Positions H64–C123 form a cross-link, 6-(S-cysteinyl)-8alpha-(pros-histidyl)-FAD (His-Cys).

The protein belongs to the oxygen-dependent FAD-linked oxidoreductase family. It depends on FAD as a cofactor.

It catalyses the reaction N-acetyl-D-glucosamine + O2 + H2O = N-acetyl-D-glucosaminate + H2O2 + H(+). The enzyme catalyses N-acetyl-D-galactosamine + O2 + H2O = N-acetyl-D-galactosaminate + H2O2 + H(+). It carries out the reaction N-acetyl-D-glucosamine + O2 = N-acetyl-D-glucosamino-1,5-lactone + H2O2. The catalysed reaction is N-acetyl-D-galactosamine + O2 = N-acetyl-D-galactosamino-1,5-lactone + H2O2. In terms of biological role, catalyzes the oxidation of a range of monosaccharides in vitro, displaying the highest activity with N-acetylglucosamine (GlcNAc) and N-acetylgalactosamine (GalNAc), with a reduction of O2 to H2O2. Acts upon the C1 carbon of the GlcNAc or GalNAc molecule, producing the corresponding lactone, which can spontaneously hydrolyze. Its biological function is unclear, but its main function might be connected to extracellular production of hydrogen peroxide to compete with other organisms through oxidative stress, or support the action of peroxidases and peroxygenases. The polypeptide is N-acetyl-D-hexosamine oxidase (Ralstonia solanacearum (strain UW551)).